We begin with the raw amino-acid sequence, 173 residues long: MVRKPGSMYRNVRQRSFTRRKYMGGVPGSQVIHYDMGDKANTSFPVKISLIVEEKCQIRHTALEAARITANRHLVADTGKMGFYMKLRVYPHEVIRENKQATGAGADRVSSGMRRAFGKNVGTAARVKPMQKIFTVAVEKQNFKAAKEALWHAGQKLPTPCRIVVDEGAELVQ.

Belongs to the universal ribosomal protein uL16 family.

The sequence is that of Large ribosomal subunit protein uL16 from Methanosarcina acetivorans (strain ATCC 35395 / DSM 2834 / JCM 12185 / C2A).